Consider the following 918-residue polypeptide: UPF0182 protein CPF_0011 (918 aa).

Transmembrane regions (helical) follow at residues 8–28 (TVLI…NFII), 46–66 (LIAI…VIAI), 91–111 (FLLS…TTQW), 151–171 (AISL…ALGF), 200–220 (LAVL…LKSY), 243–263 (IFYK…FISI), and 271–291 (IIIS…VAIF). The span at 857–869 (EENKNSNKDETPK) shows a compositional bias: basic and acidic residues. A disordered region spans residues 857 to 876 (EENKNSNKDETPKNEITSDN).

It belongs to the UPF0182 family.

The protein resides in the cell membrane. In Clostridium perfringens (strain ATCC 13124 / DSM 756 / JCM 1290 / NCIMB 6125 / NCTC 8237 / Type A), this protein is UPF0182 protein CPF_0011.